We begin with the raw amino-acid sequence, 966 residues long: Alanine--tRNA ligase, cytoplasmic (966 aa).

4 residues coordinate Zn(2+): H604, H608, C723, and H727.

The protein belongs to the class-II aminoacyl-tRNA synthetase family. As to quaternary structure, monomer. It depends on Zn(2+) as a cofactor.

It localises to the cytoplasm. The enzyme catalyses tRNA(Ala) + L-alanine + ATP = L-alanyl-tRNA(Ala) + AMP + diphosphate. In terms of biological role, catalyzes the attachment of alanine to tRNA(Ala) in a two-step reaction: alanine is first activated by ATP to form Ala-AMP and then transferred to the acceptor end of tRNA(Ala). Also edits incorrectly charged tRNA(Ala) via its editing domain. In Drosophila melanogaster (Fruit fly), this protein is Alanine--tRNA ligase, cytoplasmic.